The chain runs to 289 residues: Protease HtpX homolog (289 aa).

Transmembrane regions (helical) follow at residues 5-27 (LWVRTGLLMAFLTGLLVGIGYLI) and 40-60 (ALFMNFFSYWFSDSIVLSWYN). H133 provides a ligand contact to Zn(2+). The active site involves E134. Zn(2+) is bound at residue H137. Helical transmembrane passes span 143 to 163 (TLIQTIAAVLAGAIMVLVNFA) and 181 to 201 (IVALILAIILAPIAATLIQLA). E207 is a binding site for Zn(2+).

The protein belongs to the peptidase M48B family. Requires Zn(2+) as cofactor.

The protein resides in the cell membrane. This Pyrococcus furiosus (strain ATCC 43587 / DSM 3638 / JCM 8422 / Vc1) protein is Protease HtpX homolog.